A 167-amino-acid polypeptide reads, in one-letter code: Small ribosomal subunit protein uS5 (167 aa).

The S5 DRBM domain maps to 11–74; the sequence is LQEKLIAVNR…EKARRAMINV (64 aa).

This sequence belongs to the universal ribosomal protein uS5 family. As to quaternary structure, part of the 30S ribosomal subunit. Contacts proteins S4 and S8.

With S4 and S12 plays an important role in translational accuracy. In terms of biological role, located at the back of the 30S subunit body where it stabilizes the conformation of the head with respect to the body. This is Small ribosomal subunit protein uS5 from Yersinia pseudotuberculosis serotype O:1b (strain IP 31758).